We begin with the raw amino-acid sequence, 698 residues long: Serine/threonine-protein kinase Nek8 (698 aa).

One can recognise a Protein kinase domain in the interval 4–258 (YERIRVVGRG…LSHIMAQPLC (255 aa)). Residues 10 to 18 (VGRGAFGIV) and Lys33 each bind ATP. Asp128 functions as the Proton acceptor in the catalytic mechanism. A Phosphothreonine; by autocatalysis modification is found at Thr162. The disordered stretch occupies residues 278 to 309 (EKSLTPGPPIASGSTGSRATSARCRGVPRGPV). The span at 288 to 309 (ASGSTGSRATSARCRGVPRGPV) shows a compositional bias: low complexity. RCC1 repeat units follow at residues 416-467 (GIIM…LSTD), 468-519 (GELF…LTSP), 520-585 (GRVL…ITAS), 586-637 (GDCY…VGAE), and 638-690 (GEVY…AVRS).

It belongs to the protein kinase superfamily. NEK Ser/Thr protein kinase family. NIMA subfamily. Interacts with PKD2; may regulate PKD2 targeting to the cilium. Interacts with ANKS6. Component of a complex containing at least ANKS6, INVS, NEK8 and NPHP3. ANKS6 may organize complex assembly by linking INVS and NPHP3 to NEK8 and INVS may target the complex to the proximal ciliary axoneme. Interacts with ANKS3. Requires Mg(2+) as cofactor. As to expression, kidney, liver, and testis.

It localises to the cytoplasm. The protein localises to the cytoskeleton. It is found in the cell projection. Its subcellular location is the cilium. The protein resides in the microtubule organizing center. It localises to the centrosome. The protein localises to the cilium axoneme. The enzyme catalyses L-seryl-[protein] + ATP = O-phospho-L-seryl-[protein] + ADP + H(+). The catalysed reaction is L-threonyl-[protein] + ATP = O-phospho-L-threonyl-[protein] + ADP + H(+). Its function is as follows. Required for renal tubular integrity. May regulate local cytoskeletal structure in kidney tubule epithelial cells. May regulate ciliary biogenesis through targeting of proteins to the cilia. Plays a role in organogenesis and is involved in the regulation of the Hippo signaling pathway. The polypeptide is Serine/threonine-protein kinase Nek8 (Nek8) (Mus musculus (Mouse)).